A 243-amino-acid chain; its full sequence is Ribosomal RNA small subunit methyltransferase G (243 aa).

Residues G97, L102, 148-149 (VE), and R161 each bind S-adenosyl-L-methionine.

The protein belongs to the methyltransferase superfamily. RNA methyltransferase RsmG family.

The protein resides in the cytoplasm. The enzyme catalyses guanosine(527) in 16S rRNA + S-adenosyl-L-methionine = N(7)-methylguanosine(527) in 16S rRNA + S-adenosyl-L-homocysteine. Functionally, specifically methylates the N7 position of guanine in position 527 of 16S rRNA. The polypeptide is Ribosomal RNA small subunit methyltransferase G (Paracidovorax citrulli (strain AAC00-1) (Acidovorax citrulli)).